A 231-amino-acid polypeptide reads, in one-letter code: Large ribosomal subunit protein uL1 (231 aa).

This sequence belongs to the universal ribosomal protein uL1 family. As to quaternary structure, part of the 50S ribosomal subunit.

In terms of biological role, binds directly to 23S rRNA. The L1 stalk is quite mobile in the ribosome, and is involved in E site tRNA release. Functionally, protein L1 is also a translational repressor protein, it controls the translation of the L11 operon by binding to its mRNA. This is Large ribosomal subunit protein uL1 from Alcanivorax borkumensis (strain ATCC 700651 / DSM 11573 / NCIMB 13689 / SK2).